A 224-amino-acid chain; its full sequence is Ribosomal RNA small subunit methyltransferase G (224 aa).

Residues glycine 69, leucine 74, alanine 119–glutamate 120, and arginine 137 each bind S-adenosyl-L-methionine.

Belongs to the methyltransferase superfamily. RNA methyltransferase RsmG family.

Its subcellular location is the cytoplasm. Specifically methylates the N7 position of guanine in position 518 of 16S rRNA. The polypeptide is Ribosomal RNA small subunit methyltransferase G (Mycobacterium bovis (strain ATCC BAA-935 / AF2122/97)).